A 127-amino-acid chain; its full sequence is Glycine cleavage system H protein 1 (127 aa).

The Lipoyl-binding domain occupies 20 to 101; the sequence is SVTVGITPYA…LGAGWFFRFI (82 aa). Residue Lys-60 is modified to N6-lipoyllysine.

The protein belongs to the GcvH family. In terms of assembly, the glycine cleavage system is composed of four proteins: P, T, L and H. The cofactor is (R)-lipoate.

The glycine cleavage system catalyzes the degradation of glycine. The H protein shuttles the methylamine group of glycine from the P protein to the T protein. The sequence is that of Glycine cleavage system H protein 1 from Pseudomonas syringae pv. tomato (strain ATCC BAA-871 / DC3000).